Here is a 589-residue protein sequence, read N- to C-terminus: ATP-dependent lipid A-core flippase (589 aa).

The next 5 membrane-spanning stretches (helical) occupy residues Leu29–Leu49, Trp70–Asp90, Val157–Val177, Met261–Gly281, and Leu283–Lys303. The region spanning Val32 to Arg314 is the ABC transmembrane type-1 domain. The ABC transporter domain maps to Ile346–Met582. Gly380–Ser387 contributes to the ATP binding site.

This sequence belongs to the ABC transporter superfamily. Lipid exporter (TC 3.A.1.106) family. As to quaternary structure, homodimer.

The protein resides in the cell inner membrane. It catalyses the reaction ATP + H2O + lipid A-core oligosaccharideSide 1 = ADP + phosphate + lipid A-core oligosaccharideSide 2.. Its function is as follows. Involved in lipopolysaccharide (LPS) biosynthesis. Translocates lipid A-core from the inner to the outer leaflet of the inner membrane. Transmembrane domains (TMD) form a pore in the inner membrane and the ATP-binding domain (NBD) is responsible for energy generation. This is ATP-dependent lipid A-core flippase from Xanthomonas euvesicatoria pv. vesicatoria (strain 85-10) (Xanthomonas campestris pv. vesicatoria).